Reading from the N-terminus, the 290-residue chain is MRIADYSVTKAVLDRHGFTFKKSFGQNFLTDTNILQKIVDTAEIDQNVNVIEIGPGIGALTEFLAENAAEVMAFEIDDRLVPILADTLRDFDNVQVVNQDILKADLQTQIKQFKNPDLPIKVVANLPYYITTPILMHLIESKIPFQEFVVMMQREVADRISAEPNTKAYGSLSIAVQYYMTAKVAFIVPRTVFVPAPNVDSAILKMVRRDQPLIEIKDEDFFFRVSRLSFVHRRKTLWNNLTSHFGKSEDIKTKLEKGLALADIKPSIRGEALSIQDFGKLADALKEVGL.

Positions 27, 29, 54, 75, 100, and 125 each coordinate S-adenosyl-L-methionine.

It belongs to the class I-like SAM-binding methyltransferase superfamily. rRNA adenine N(6)-methyltransferase family. RsmA subfamily.

The protein resides in the cytoplasm. It carries out the reaction adenosine(1518)/adenosine(1519) in 16S rRNA + 4 S-adenosyl-L-methionine = N(6)-dimethyladenosine(1518)/N(6)-dimethyladenosine(1519) in 16S rRNA + 4 S-adenosyl-L-homocysteine + 4 H(+). Specifically dimethylates two adjacent adenosines (A1518 and A1519) in the loop of a conserved hairpin near the 3'-end of 16S rRNA in the 30S particle. May play a critical role in biogenesis of 30S subunits. In Streptococcus pyogenes serotype M5 (strain Manfredo), this protein is Ribosomal RNA small subunit methyltransferase A.